Consider the following 245-residue polypeptide: tRNA (guanine-N(1)-)-methyltransferase (245 aa).

S-adenosyl-L-methionine-binding positions include G114 and 133–138; that span reads IGDYVL.

The protein belongs to the RNA methyltransferase TrmD family. In terms of assembly, homodimer.

Its subcellular location is the cytoplasm. It catalyses the reaction guanosine(37) in tRNA + S-adenosyl-L-methionine = N(1)-methylguanosine(37) in tRNA + S-adenosyl-L-homocysteine + H(+). Functionally, specifically methylates guanosine-37 in various tRNAs. The sequence is that of tRNA (guanine-N(1)-)-methyltransferase from Prochlorococcus marinus (strain MIT 9312).